Reading from the N-terminus, the 427-residue chain is Serine--tRNA ligase (427 aa).

An L-serine-binding site is contributed by 231–233 (TAE). 262-264 (RSE) is an ATP binding site. L-serine is bound at residue E285. 349 to 352 (EISS) lines the ATP pocket. Residue S385 participates in L-serine binding.

Belongs to the class-II aminoacyl-tRNA synthetase family. Type-1 seryl-tRNA synthetase subfamily. In terms of assembly, homodimer. The tRNA molecule binds across the dimer.

It is found in the cytoplasm. The catalysed reaction is tRNA(Ser) + L-serine + ATP = L-seryl-tRNA(Ser) + AMP + diphosphate + H(+). It catalyses the reaction tRNA(Sec) + L-serine + ATP = L-seryl-tRNA(Sec) + AMP + diphosphate + H(+). It functions in the pathway aminoacyl-tRNA biosynthesis; selenocysteinyl-tRNA(Sec) biosynthesis; L-seryl-tRNA(Sec) from L-serine and tRNA(Sec): step 1/1. Its function is as follows. Catalyzes the attachment of serine to tRNA(Ser). Is also able to aminoacylate tRNA(Sec) with serine, to form the misacylated tRNA L-seryl-tRNA(Sec), which will be further converted into selenocysteinyl-tRNA(Sec). The protein is Serine--tRNA ligase of Rhizobium etli (strain CIAT 652).